A 392-amino-acid chain; its full sequence is MTANAPITQDVMTLPRKLPEGGPVNIVGLTREELLAALVAAGTPERQAKMRAGQVWQWVYHWGVRDFAQMTNLAKDYRALLAEHFAIVLPEVVTRQISADGTRKYLIRIAGGHEVETVYIPEEGRGTLCVSSQVGCTLTCSFCHTGTQKLVRNLTAAEIVGQLMLVRDDLGEWPERGAPKDETRLVSNLVLMGMGEPLYNFENVRNAMKVVMDGEGLSLSRRRITLSTSGVVPEIARTAEEIGCQLAISFHATTDEVRDILVPINKRWNIRTLLDSLRDYPRLSNSERITFEYVMLDGVNDTDADARRLVKLISGIPSKINLIPFNEWPGAPYRRSTPERIAAFADIIYKAGYASPIRTPRGEDIMAACGQLKSATERARKSRAQIAAETGL.

The Proton acceptor role is filled by Glu-116. Residues 122–364 (EEGRGTLCVS…SPIRTPRGED (243 aa)) form the Radical SAM core domain. Cys-129 and Cys-369 form a disulfide bridge. The [4Fe-4S] cluster site is built by Cys-136, Cys-140, and Cys-143. Residues 195-196 (GE), Ser-227, 249-251 (SFH), and Asn-326 each bind S-adenosyl-L-methionine. Cys-369 acts as the S-methylcysteine intermediate in catalysis.

The protein belongs to the radical SAM superfamily. RlmN family. The cofactor is [4Fe-4S] cluster.

Its subcellular location is the cytoplasm. The catalysed reaction is adenosine(2503) in 23S rRNA + 2 reduced [2Fe-2S]-[ferredoxin] + 2 S-adenosyl-L-methionine = 2-methyladenosine(2503) in 23S rRNA + 5'-deoxyadenosine + L-methionine + 2 oxidized [2Fe-2S]-[ferredoxin] + S-adenosyl-L-homocysteine. It catalyses the reaction adenosine(37) in tRNA + 2 reduced [2Fe-2S]-[ferredoxin] + 2 S-adenosyl-L-methionine = 2-methyladenosine(37) in tRNA + 5'-deoxyadenosine + L-methionine + 2 oxidized [2Fe-2S]-[ferredoxin] + S-adenosyl-L-homocysteine. Functionally, specifically methylates position 2 of adenine 2503 in 23S rRNA and position 2 of adenine 37 in tRNAs. m2A2503 modification seems to play a crucial role in the proofreading step occurring at the peptidyl transferase center and thus would serve to optimize ribosomal fidelity. This chain is Dual-specificity RNA methyltransferase RlmN, found in Cereibacter sphaeroides (strain ATCC 17029 / ATH 2.4.9) (Rhodobacter sphaeroides).